Consider the following 586-residue polypeptide: Monoterpene synthase TPS4, chloroplastic (586 aa).

Residues 1 to 47 (MAATRNLSLLAQSSQPWAGIYGSHGSPRPISSWLRRQSIAKTSYICM) constitute a chloroplast transit peptide. Residues Asp340, Asp344, Asp485, Thr489, and Glu493 each contribute to the Mg(2+) site. The short motif at 340–344 (DDIFD) is the DDXXD motif element.

Belongs to the terpene synthase family. Tpsg subfamily. As to quaternary structure, monomer. The cofactor is Mg(2+).

It is found in the plastid. It localises to the chloroplast. The catalysed reaction is (2E)-geranyl diphosphate + H2O = (2E)-geraniol + diphosphate. Its pathway is secondary metabolite biosynthesis; terpenoid biosynthesis. Monoterpene synthase involved in the biosynthesis of volatile organic compounds. Mediates the conversion of (2E)-geranyl diphosphate (GPP) into the acyclic monoterpene, geraniol. Does not use (2E,6E)-farnesyl diphosphate (FPP) as substrate. The sequence is that of Monoterpene synthase TPS4, chloroplastic from Cananga odorata (Ylang-ylang tree).